Reading from the N-terminus, the 345-residue chain is Holliday junction branch migration complex subunit RuvB (345 aa).

Residues 1–182 (MQRLVEVESV…FGMHFRMQFY (182 aa)) form a large ATPase domain (RuvB-L) region. Residues Leu21, Arg22, Gly63, Lys66, Thr67, Thr68, 129 to 131 (EDY), Arg172, Tyr182, and Arg219 contribute to the ATP site. Thr67 serves as a coordination point for Mg(2+). Positions 183-253 (TEIELAKIIQ…RCKYALDELG (71 aa)) are small ATPAse domain (RuvB-S). Positions 256–345 (ESGFDEMDIN…EDDLTQGKLF (90 aa)) are head domain (RuvB-H). DNA-binding residues include Arg310 and Arg315.

It belongs to the RuvB family. Homohexamer. Forms an RuvA(8)-RuvB(12)-Holliday junction (HJ) complex. HJ DNA is sandwiched between 2 RuvA tetramers; dsDNA enters through RuvA and exits via RuvB. An RuvB hexamer assembles on each DNA strand where it exits the tetramer. Each RuvB hexamer is contacted by two RuvA subunits (via domain III) on 2 adjacent RuvB subunits; this complex drives branch migration. In the full resolvosome a probable DNA-RuvA(4)-RuvB(12)-RuvC(2) complex forms which resolves the HJ.

The protein resides in the cytoplasm. It catalyses the reaction ATP + H2O = ADP + phosphate + H(+). In terms of biological role, the RuvA-RuvB-RuvC complex processes Holliday junction (HJ) DNA during genetic recombination and DNA repair, while the RuvA-RuvB complex plays an important role in the rescue of blocked DNA replication forks via replication fork reversal (RFR). RuvA specifically binds to HJ cruciform DNA, conferring on it an open structure. The RuvB hexamer acts as an ATP-dependent pump, pulling dsDNA into and through the RuvAB complex. RuvB forms 2 homohexamers on either side of HJ DNA bound by 1 or 2 RuvA tetramers; 4 subunits per hexamer contact DNA at a time. Coordinated motions by a converter formed by DNA-disengaged RuvB subunits stimulates ATP hydrolysis and nucleotide exchange. Immobilization of the converter enables RuvB to convert the ATP-contained energy into a lever motion, pulling 2 nucleotides of DNA out of the RuvA tetramer per ATP hydrolyzed, thus driving DNA branch migration. The RuvB motors rotate together with the DNA substrate, which together with the progressing nucleotide cycle form the mechanistic basis for DNA recombination by continuous HJ branch migration. Branch migration allows RuvC to scan DNA until it finds its consensus sequence, where it cleaves and resolves cruciform DNA. This is Holliday junction branch migration complex subunit RuvB from Aliarcobacter butzleri (strain RM4018) (Arcobacter butzleri).